The sequence spans 164 residues: Putative pre-16S rRNA nuclease (164 aa).

It belongs to the YqgF nuclease family.

The protein localises to the cytoplasm. In terms of biological role, could be a nuclease involved in processing of the 5'-end of pre-16S rRNA. The protein is Putative pre-16S rRNA nuclease of Rhizobium rhizogenes (strain K84 / ATCC BAA-868) (Agrobacterium radiobacter).